Reading from the N-terminus, the 217-residue chain is Thiopurine S-methyltransferase (217 aa).

S-adenosyl-L-methionine-binding residues include Trp-10, Leu-45, Glu-66, and Arg-127.

Belongs to the class I-like SAM-binding methyltransferase superfamily. TPMT family.

It is found in the cytoplasm. The catalysed reaction is S-adenosyl-L-methionine + a thiopurine = S-adenosyl-L-homocysteine + a thiopurine S-methylether.. The polypeptide is Thiopurine S-methyltransferase (Acinetobacter baylyi (strain ATCC 33305 / BD413 / ADP1)).